Here is a 367-residue protein sequence, read N- to C-terminus: D-alanine--D-alanine ligase (367 aa).

Residues 148 to 357 (KMAFEQAGLP…FPELVDKLVQ (210 aa)) form the ATP-grasp domain. An ATP-binding site is contributed by 184–239 (EASLGYPCFVKPANLGSSVGISKVRSRQELEDALDNAANYDRRIIVEAGVVAREVE). Residues Asp310, Glu324, and Asn326 each contribute to the Mg(2+) site.

Belongs to the D-alanine--D-alanine ligase family. Requires Mg(2+) as cofactor. Mn(2+) serves as cofactor.

The protein resides in the cytoplasm. It carries out the reaction 2 D-alanine + ATP = D-alanyl-D-alanine + ADP + phosphate + H(+). Its pathway is cell wall biogenesis; peptidoglycan biosynthesis. In terms of biological role, cell wall formation. In Trichormus variabilis (strain ATCC 29413 / PCC 7937) (Anabaena variabilis), this protein is D-alanine--D-alanine ligase.